Consider the following 371-residue polypeptide: tRNA-specific 2-thiouridylase MnmA (371 aa).

ATP contacts are provided by residues 24 to 31 (AMSGGVDS) and Leu-50. Cys-120 acts as the Nucleophile in catalysis. A disulfide bridge links Cys-120 with Cys-216. Gly-144 is an ATP binding site. The segment at 166 to 168 (KDQ) is interaction with tRNA. Cys-216 serves as the catalytic Cysteine persulfide intermediate.

Belongs to the MnmA/TRMU family.

Its subcellular location is the cytoplasm. The catalysed reaction is S-sulfanyl-L-cysteinyl-[protein] + uridine(34) in tRNA + AH2 + ATP = 2-thiouridine(34) in tRNA + L-cysteinyl-[protein] + A + AMP + diphosphate + H(+). In terms of biological role, catalyzes the 2-thiolation of uridine at the wobble position (U34) of tRNA, leading to the formation of s(2)U34. The sequence is that of tRNA-specific 2-thiouridylase MnmA from Wolbachia sp. subsp. Brugia malayi (strain TRS).